Reading from the N-terminus, the 655-residue chain is Probable alpha-galactosidase D (655 aa).

The N-terminal stretch at 1–16 (MASVIALSLLLPAAFA) is a signal peptide. Asparagine 87 and asparagine 93 each carry an N-linked (GlcNAc...) asparagine glycan. Cysteine 126 and cysteine 153 are disulfide-bonded. The active-site Nucleophile is the aspartate 151. 196–200 (EWGID) contacts substrate. The active-site Proton donor is the aspartate 218. N-linked (GlcNAc...) asparagine glycans are attached at residues asparagine 432, asparagine 482, asparagine 502, asparagine 540, and asparagine 579.

Belongs to the glycosyl hydrolase 27 family.

Its subcellular location is the secreted. The enzyme catalyses Hydrolysis of terminal, non-reducing alpha-D-galactose residues in alpha-D-galactosides, including galactose oligosaccharides, galactomannans and galactolipids.. Hydrolyzes a variety of simple alpha-D-galactoside as well as more complex molecules such as oligosaccharides and polysaccharides. This Aspergillus terreus (strain NIH 2624 / FGSC A1156) protein is Probable alpha-galactosidase D (aglD).